The sequence spans 333 residues: Adenosine deaminase (333 aa).

Zn(2+) is bound by residues histidine 12 and histidine 14. Residues histidine 14, aspartate 16, and glycine 170 each contribute to the substrate site. Residue histidine 197 coordinates Zn(2+). Catalysis depends on glutamate 200, which acts as the Proton donor. Residue aspartate 278 participates in Zn(2+) binding. Substrate is bound at residue aspartate 279.

The protein belongs to the metallo-dependent hydrolases superfamily. Adenosine and AMP deaminases family. Adenosine deaminase subfamily. Zn(2+) serves as cofactor.

It carries out the reaction adenosine + H2O + H(+) = inosine + NH4(+). The catalysed reaction is 2'-deoxyadenosine + H2O + H(+) = 2'-deoxyinosine + NH4(+). In terms of biological role, catalyzes the hydrolytic deamination of adenosine and 2-deoxyadenosine. The protein is Adenosine deaminase of Salmonella agona (strain SL483).